Here is a 297-residue protein sequence, read N- to C-terminus: Phosphoribosylaminoimidazole-succinocarboxamide synthase (297 aa).

The protein belongs to the SAICAR synthetase family.

The catalysed reaction is 5-amino-1-(5-phospho-D-ribosyl)imidazole-4-carboxylate + L-aspartate + ATP = (2S)-2-[5-amino-1-(5-phospho-beta-D-ribosyl)imidazole-4-carboxamido]succinate + ADP + phosphate + 2 H(+). It functions in the pathway purine metabolism; IMP biosynthesis via de novo pathway; 5-amino-1-(5-phospho-D-ribosyl)imidazole-4-carboxamide from 5-amino-1-(5-phospho-D-ribosyl)imidazole-4-carboxylate: step 1/2. This is Phosphoribosylaminoimidazole-succinocarboxamide synthase from Mycobacterium marinum (strain ATCC BAA-535 / M).